A 502-amino-acid polypeptide reads, in one-letter code: Cytochrome P450 monooxygenase pyr9 (502 aa).

The helical transmembrane segment at 5–25 threads the bilayer; sequence EDASIGTVWVTCLLAVGLYFI. Residues asparagine 205, asparagine 291, and asparagine 372 are each glycosylated (N-linked (GlcNAc...) asparagine). Position 437 (cysteine 437) interacts with heme.

It belongs to the cytochrome P450 family. It depends on heme as a cofactor.

The protein localises to the membrane. The protein operates within secondary metabolite biosynthesis; terpenoid biosynthesis. In terms of biological role, cytochrome P450 monooxygenase; part of the gene cluster that mediates the biosynthesis of pyripyropene A, a specific human acyl-coenzyme A:cholesterol acyltransferase 2 inhibitor. The first step of the pathway is the synthesis of nicotinyl-CoA from nicotinic acid by the nicotinic acid-CoA ligase pyr1. Nicotinyl-CoA is then a substrate of polyketide synthase pyr2 to produce 4-hydroxy-6-(3-pyridinyl)-2H-pyran-2-one (HPPO) which is further prenylated by the polyprenyl transferase pyr6 to yield farnesyl-HPPO. The next steps consist of an epoxidation of farnesyl-HPPO to epoxyfarnesyl-HPPO by FAD-dependent monooxygenase pyr5 and a cyclization of the terpenoid portion by the terpene cyclase pyr4 to yield deacetyl-pyripyropene E. The 2 cytochrome P450 monooxygenases pyr3 and pyr9, and the 2 acetyltransferases pyr7 and pyr8 are involved in the conversion of deacetyl-pyripyropene E into pyripyropene A through several cycles of oxidation and acetylation steps. Pyr7 acetylates deacetyl-pyripyropene E to pyripyropene E which is oxidized to 11-deacetyl-pyripyropene O by pyr3, which is in turn acetylated into pyripyropene O by pyr8. Pyripyropene O is then oxidized to deacetyl-pyripyropene A by pyr9. Deacetyl-pyripyropene A is finally acetylated to pyripyropene A by pyr8. This chain is Cytochrome P450 monooxygenase pyr9, found in Aspergillus fumigatus (strain ATCC MYA-4609 / CBS 101355 / FGSC A1100 / Af293) (Neosartorya fumigata).